The primary structure comprises 74 residues: Translation initiation factor IF-1 (74 aa).

The S1-like domain occupies 1 to 72 (MSKEDAIEME…NKGRITYRLK (72 aa)).

It belongs to the IF-1 family. As to quaternary structure, component of the 30S ribosomal translation pre-initiation complex which assembles on the 30S ribosome in the order IF-2 and IF-3, IF-1 and N-formylmethionyl-tRNA(fMet); mRNA recruitment can occur at any time during PIC assembly.

It localises to the cytoplasm. In terms of biological role, one of the essential components for the initiation of protein synthesis. Stabilizes the binding of IF-2 and IF-3 on the 30S subunit to which N-formylmethionyl-tRNA(fMet) subsequently binds. Helps modulate mRNA selection, yielding the 30S pre-initiation complex (PIC). Upon addition of the 50S ribosomal subunit IF-1, IF-2 and IF-3 are released leaving the mature 70S translation initiation complex. In Synechococcus sp. (strain JA-2-3B'a(2-13)) (Cyanobacteria bacterium Yellowstone B-Prime), this protein is Translation initiation factor IF-1.